Here is a 259-residue protein sequence, read N- to C-terminus: Tryptophan synthase alpha chain (259 aa).

Catalysis depends on proton acceptor residues Glu-52 and Asp-63.

Belongs to the TrpA family. Tetramer of two alpha and two beta chains.

It catalyses the reaction (1S,2R)-1-C-(indol-3-yl)glycerol 3-phosphate + L-serine = D-glyceraldehyde 3-phosphate + L-tryptophan + H2O. It participates in amino-acid biosynthesis; L-tryptophan biosynthesis; L-tryptophan from chorismate: step 5/5. The alpha subunit is responsible for the aldol cleavage of indoleglycerol phosphate to indole and glyceraldehyde 3-phosphate. The chain is Tryptophan synthase alpha chain from Streptococcus sanguinis (strain SK36).